Reading from the N-terminus, the 210-residue chain is MELQLAIDLLNKEDAAELANKVKDYVDIVEIGTPIIYNEGLPAVKHMADNISNVKVLADMKIMDAADYEVSQAIKFGADVITILGVAEDASIKAAIEEAHKNNKQLLVDMIAVQDLEKRAKELDEMGADYIAVHTGYDLQAEGQSPLESLRTVKSVIKNSKVAVAGGIKPDTIKEIVAESPDLVIVGGGIANADDPVEAAKQCRAAIEGK.

This sequence belongs to the HPS/KGPDC family. HPS subfamily.

It carries out the reaction D-ribulose 5-phosphate + formaldehyde = D-arabino-hex-3-ulose 6-phosphate. It functions in the pathway one-carbon metabolism; formaldehyde assimilation via RuMP pathway; D-fructose 6-phosphate from D-ribulose 5-phosphate and formaldehyde: step 1/2. Functionally, catalyzes the condensation of ribulose 5-phosphate with formaldehyde to form 3-hexulose 6-phosphate. The protein is 3-hexulose-6-phosphate synthase of Staphylococcus aureus (strain MRSA252).